We begin with the raw amino-acid sequence, 624 residues long: DNA mismatch repair protein MutL (624 aa).

The segment at 355-377 is disordered; the sequence is EESAPERKLPEKTPEPSYSPMKL. Over residues 358-368 the composition is skewed to basic and acidic residues; that stretch reads APERKLPEKTP.

This sequence belongs to the DNA mismatch repair MutL/HexB family.

Its function is as follows. This protein is involved in the repair of mismatches in DNA. It is required for dam-dependent methyl-directed DNA mismatch repair. May act as a 'molecular matchmaker', a protein that promotes the formation of a stable complex between two or more DNA-binding proteins in an ATP-dependent manner without itself being part of a final effector complex. The protein is DNA mismatch repair protein MutL of Bacillus velezensis (strain DSM 23117 / BGSC 10A6 / LMG 26770 / FZB42) (Bacillus amyloliquefaciens subsp. plantarum).